We begin with the raw amino-acid sequence, 215 residues long: Probable Rab-related GTPase (215 aa).

20-27 is a binding site for GTP; sequence GSSGVGKS. The short motif at 42–50 is the Effector region element; sequence VSPTIGAAF. Residues 69–73 and 127–130 contribute to the GTP site; these read DTAGQ and NKID. 2 S-geranylgeranyl cysteine; by host lipidation sites follow: Cys-211 and Cys-212. Cys-212 carries the cysteine methyl ester; by host modification. Residues 213–215 constitute a propeptide, removed in mature form; the sequence is YIS.

It belongs to the small GTPase superfamily. Rab family.

The protein localises to the host cell membrane. Functionally, may be involved in protein transport. The polypeptide is Probable Rab-related GTPase (Acanthamoeba polyphaga mimivirus (APMV)).